A 374-amino-acid polypeptide reads, in one-letter code: Proteinase-activated receptor 3 (374 aa).

An N-terminal signal peptide occupies residues 1-21 (MKALIFAAAGLLLLLPTFCQS). Positions 22–38 (GMENDTNNLAKPTLPIK) are cleaved as a propeptide — removed for receptor activation. N-linked (GlcNAc...) asparagine glycosylation is found at N25 and N82. Over 39–94 (TFRGAPPNSFEEFPFSALEGWTGATITVKIKCPEESASHLHVKNATMGYLTSSLST) the chain is Extracellular. A helical transmembrane segment spans residues 95-120 (KLIPAIYLLVFVVGVPANAVTLWMLF). The Cytoplasmic portion of the chain corresponds to 121–128 (FRTRSICT). A helical transmembrane segment spans residues 129-148 (TVFYTNLAIADFLFCVTLPF). Over 149–167 (KIAYHLNGNNWVFGEVLCR) the chain is Extracellular. C166 and C245 are oxidised to a cystine. A helical membrane pass occupies residues 168–189 (ATTVIFYGNMYCSILLLACISI). Residues 190-206 (NRYLAIVHPFTYRGLPK) are Cytoplasmic-facing. A helical membrane pass occupies residues 207–230 (HTYALVTCGLVWATVFLYMLPFFI). Residues 231–260 (LKQEYYLVQPDITTCHDVHNTCESSSPFQL) are Extracellular-facing. The chain crosses the membrane as a helical span at residues 261-280 (YYFISLAFFGFLIPFVLIIY). The Cytoplasmic portion of the chain corresponds to 281–297 (CYAAIIRTLNAYDHRWL). The helical transmembrane segment at 298–322 (WYVKASLLILVIFTICFAPSNIILI) threads the bilayer. The Extracellular segment spans residues 323 to 336 (IHHANYYYNNTDGL). An N-linked (GlcNAc...) asparagine glycan is attached at N331. A helical transmembrane segment spans residues 337–361 (YFIYLIALCLGSLNSCLDPFLYFLM). Topologically, residues 362-374 (SKTRNHSTAYLTK) are cytoplasmic.

This sequence belongs to the G-protein coupled receptor 1 family. As to quaternary structure, interacts with INSC/inscuteable and probably GPSM2. In terms of processing, a proteolytic cleavage generates a new N-terminus that functions as a tethered ligand. As to expression, highest expression in the megakaryocytes of the bone marrow, lower in mature megakaryocytes, in platelets and in a variety of other tissues such as heart and gut.

The protein resides in the cell membrane. Its function is as follows. Receptor for activated thrombin coupled to G proteins that stimulate phosphoinositide hydrolysis. This is Proteinase-activated receptor 3 (F2RL2) from Homo sapiens (Human).